A 129-amino-acid chain; its full sequence is Large ribosomal subunit protein bL21 (129 aa).

The protein belongs to the bacterial ribosomal protein bL21 family. In terms of assembly, part of the 50S ribosomal subunit. Contacts protein L20.

Functionally, this protein binds to 23S rRNA in the presence of protein L20. The sequence is that of Large ribosomal subunit protein bL21 from Prochlorococcus marinus (strain MIT 9313).